The primary structure comprises 1026 residues: Multidrug resistance protein MdtC (1026 aa).

11 consecutive transmembrane segments (helical) span residues 15–35 (ILIA…LPVA), 333–353 (EVEE…FLFL), 360–380 (LIPA…MYLC), 387–407 (LSLM…IVVL), 431–451 (VGFT…PLLL), 463–483 (FAVT…TLTP), 528–548 (LVGV…IAIP), 853–873 (LILI…LYES), 897–917 (LFNA…IGIV), 953–973 (PIMM…LSGG), and 984–1004 (ITIV…TPVV).

Belongs to the resistance-nodulation-cell division (RND) (TC 2.A.6) family. MdtC subfamily. Part of a tripartite efflux system composed of MdtA, MdtB and MdtC. MdtC forms a heteromultimer with MdtB.

It is found in the cell inner membrane. The sequence is that of Multidrug resistance protein MdtC from Salmonella paratyphi C (strain RKS4594).